The following is a 431-amino-acid chain: Enolase (431 aa).

Residue Gln-167 participates in (2R)-2-phosphoglycerate binding. The active-site Proton donor is Glu-209. Residues Asp-246, Glu-289, and Asp-316 each coordinate Mg(2+). Residues Lys-341, Arg-370, Ser-371, and Lys-392 each contribute to the (2R)-2-phosphoglycerate site. Lys-341 functions as the Proton acceptor in the catalytic mechanism.

This sequence belongs to the enolase family. Component of the RNA degradosome, a multiprotein complex involved in RNA processing and mRNA degradation. It depends on Mg(2+) as a cofactor.

Its subcellular location is the cytoplasm. It is found in the secreted. The protein localises to the cell surface. The enzyme catalyses (2R)-2-phosphoglycerate = phosphoenolpyruvate + H2O. It functions in the pathway carbohydrate degradation; glycolysis; pyruvate from D-glyceraldehyde 3-phosphate: step 4/5. Its function is as follows. Catalyzes the reversible conversion of 2-phosphoglycerate (2-PG) into phosphoenolpyruvate (PEP). It is essential for the degradation of carbohydrates via glycolysis. This Shewanella pealeana (strain ATCC 700345 / ANG-SQ1) protein is Enolase.